Here is a 525-residue protein sequence, read N- to C-terminus: MEINDFDKLGIKDVKKVYYNPDYETLFQKELEQQEGVETTLGAVAVDTGIFTGRSPKDKYFVKQPPSEKYIAWGDINQPISKEIFDELFEKTKEYLSGKELYVMDAFAGASDDSKKAIRVVTEIAWQAHFVKNMFIRPTEEELQNFHPDFTLYVAANLKNDRYKEHGLNSDVFIIFNIEENIAIIGGTWYGGEIKKGIFSMMNYWLPLEGKLSMHCSANIGDKDDVALFFGLSGTGKTTLSADPNRRLIGDDEHGWDDNGVFNFEGGCYAKVIGLDPEKEPDIYAAIKRDALLENVVVKENGEVDFEDSSKTENTRVSYPIYHICKHKEDLQGPHPKNIIFLSADAFGVLPPVSKLTKEQAMYYFLSGYTAKVAGTERGITEPVATFSACFGEAFLPLHPTVYAKLLGEKIDKHGVNVYLVNTGWTGGPYGIGQRMSLPATRSCINAILNGSITQSEYEILPIFNLEIPTYVEGVDPAILNPRNTWEDKEAYDRQLEHLAKLFIDNFKRYEGYGNFDYSKAGPQL.

R54, Y190, and K196 together coordinate substrate. Residues K196, H215, and 231 to 239 (GLSGTGKTT) contribute to the ATP site. Mn(2+)-binding residues include K196 and H215. D252 provides a ligand contact to Mn(2+). ATP contacts are provided by E280, R316, and T441. Substrate is bound at residue R316.

Belongs to the phosphoenolpyruvate carboxykinase (ATP) family. Mn(2+) is required as a cofactor.

It is found in the cytoplasm. The catalysed reaction is oxaloacetate + ATP = phosphoenolpyruvate + ADP + CO2. It functions in the pathway carbohydrate biosynthesis; gluconeogenesis. Involved in the gluconeogenesis. Catalyzes the conversion of oxaloacetate (OAA) to phosphoenolpyruvate (PEP) through direct phosphoryl transfer between the nucleoside triphosphate and OAA. In Nitratiruptor sp. (strain SB155-2), this protein is Phosphoenolpyruvate carboxykinase (ATP).